A 667-amino-acid polypeptide reads, in one-letter code: MAEVPEDYDSGPDEDGEPESERPELHKSYENAERDTMAEADSKLPAEIYHEPQPETEEEDFREGEPKSAKNVQLKPGGTALEGIAKESKRDVPSETEPGIPQEVKSEREMGEFFKDLEAPMDETHESDLEPPEEAKLNVTEDVFLESAMETDPVPPTETMSEVSGATVRERNLELLEEGTELGVPEESLRVQHEETGVEPPEQTQLDFPSEKPGESLEETDLQPPKMTKPDIPEETQRESTEKKRTEPPEQARPEFPEKEPRKSSEEAGLEPPEETQPEVPGEMQRKATEEKGTELPERTKPDLPDHKSRKSTDENVPEPLEEIKLEFPEEESRKPNEETILEQSEMMKPESPEEIRKSNEEKNPQPPEETGLVLPQEINPRVEEKTQTKPTEEKNLELPDETKPRETHVEFPKEDRPEPIKSKYSVGKNELEFREPKKGKWSLSDEFKKEYYALGSIRESEESIGTHYEFSQPLQKSFDVSEVCSYLDPSESLTELNEFVHEKEVVDLSQDLKELVSEDDETQSKQGTELQFEHLNWDPEKVAEWISQLGFPQYKGCFITNFISGRKLIHVNCSNLPQMGITNFEDMKAISRHTRELLEIEEPLFKRSISLPHRDIIGLYLEQKGHTGIKSDALTLSEFVKAAGLQDYAPEITAPEENEELPCTEP.

A compositionally biased stretch (acidic residues) spans 1 to 18 (MAEVPEDYDSGPDEDGEP). Disordered stretches follow at residues 1–108 (MAEV…KSER) and 147–424 (SAME…IKSK). Basic and acidic residues-rich tracts occupy residues 19–53 (ESERPELHKSYENAERDTMAEADSKLPAEIYHEPQ), 84–93 (IAKESKRDVP), 187–196 (ESLRVQHEET), and 228–266 (TKPDIPEETQRESTEKKRTEPPEQARPEFPEKEPRKSSE). A compositionally biased stretch (acidic residues) spans 268–277 (AGLEPPEETQ). 4 stretches are compositionally biased toward basic and acidic residues: residues 284–314 (MQRKATEEKGTELPERTKPDLPDHKSRKSTD), 322–338 (EEIKLEFPEEESRKPNE), 346–364 (EMMKPESPEEIRKSNEEKN), and 381–422 (PRVE…EPIK). In terms of domain architecture, SAM spans 538 to 601 (WDPEKVAEWI…SRHTRELLEI (64 aa)).

The sequence is that of Sterile alpha motif domain-containing protein 15 (SAMD15) from Macaca fascicularis (Crab-eating macaque).